The sequence spans 359 residues: CMP-N-acetylneuraminate-poly-alpha-2,8-sialyltransferase (359 aa).

Over 1 to 7 (MRSIRKR) the chain is Cytoplasmic. The chain crosses the membrane as a helical; Signal-anchor for type II membrane protein span at residues 8–20 (WTICTISLLLIFY). Topologically, residues 21–359 (KTKEIARTEE…KLTTGKCVKQ (339 aa)) are lumenal. 3 N-linked (GlcNAc...) asparagine glycosylation sites follow: asparagine 50, asparagine 74, and asparagine 119. 2 cysteine pairs are disulfide-bonded: cysteine 142–cysteine 292 and cysteine 156–cysteine 356. CMP-N-acetyl-beta-neuraminate contacts are provided by asparagine 147 and asparagine 170. Asparagine 204 and asparagine 219 each carry an N-linked (GlcNAc...) asparagine glycan. CMP-N-acetyl-beta-neuraminate contacts are provided by serine 279, threonine 280, glycine 281, and tryptophan 301. Histidine 331 acts as the Proton donor/acceptor in catalysis.

It belongs to the glycosyltransferase 29 family. Autopolysialylated.

Its subcellular location is the golgi apparatus membrane. The protein localises to the secreted. The enzyme catalyses [N-acetyl-alpha-D-neuraminosyl-(2-&gt;8)](n) + CMP-N-acetyl-beta-neuraminate = [N-acetyl-alpha-D-neuraminosyl-(2-&gt;8)](n+1) + CMP + H(+). Catalyzes the transfer of a sialic acid from a CMP-linked sialic acid donor onto a terminal alpha-2,3-, alpha-2,6-, or alpha-2,8-linked sialic acid of an N-linked glycan protein acceptor through alpha-2,8-linkages. Therefore, participates in polysialic acid synthesis on various sialylated N-acetyllactosaminyl oligosaccharides, including NCAM1 N-glycans, FETUB N-glycans and AHSG. It is noteworthy that alpha-2,3-linked sialic acid is apparently a better acceptor than alpha-2,6-linked sialic acid. This chain is CMP-N-acetylneuraminate-poly-alpha-2,8-sialyltransferase (ST8SIA4), found in Pan troglodytes (Chimpanzee).